Here is a 459-residue protein sequence, read N- to C-terminus: Putrescine aminotransferase (459 aa).

Residues 150–151 (GT) and Gln-274 each bind pyridoxal 5'-phosphate. N6-(pyridoxal phosphate)lysine is present on Lys-300. Thr-332 is a binding site for pyridoxal 5'-phosphate.

It belongs to the class-III pyridoxal-phosphate-dependent aminotransferase family. Putrescine aminotransferase subfamily. It depends on pyridoxal 5'-phosphate as a cofactor.

It carries out the reaction an alkane-alpha,omega-diamine + 2-oxoglutarate = an omega-aminoaldehyde + L-glutamate. The enzyme catalyses putrescine + 2-oxoglutarate = 1-pyrroline + L-glutamate + H2O. It catalyses the reaction cadaverine + 2-oxoglutarate = 5-aminopentanal + L-glutamate. It functions in the pathway amine and polyamine degradation; putrescine degradation; 4-aminobutanal from putrescine (transaminase route): step 1/1. In terms of biological role, catalyzes the aminotransferase reaction from putrescine to 2-oxoglutarate, leading to glutamate and 4-aminobutanal, which spontaneously cyclizes to form 1-pyrroline. This is the first step in one of two pathways for putrescine degradation, where putrescine is converted into 4-aminobutanoate (gamma-aminobutyrate or GABA) via 4-aminobutanal. Also functions as a cadaverine transaminase in a a L-lysine degradation pathway to succinate that proceeds via cadaverine, glutarate and L-2-hydroxyglutarate. The sequence is that of Putrescine aminotransferase from Escherichia coli (strain K12 / MC4100 / BW2952).